Consider the following 34-residue polypeptide: Photosystem II reaction center protein M (34 aa).

Residues 5-25 form a helical membrane-spanning segment; that stretch reads ILAFIAIVLFISVPTAFLLII.

This sequence belongs to the PsbM family. As to quaternary structure, PSII is composed of 1 copy each of membrane proteins PsbA, PsbB, PsbC, PsbD, PsbE, PsbF, PsbH, PsbI, PsbJ, PsbK, PsbL, PsbM, PsbT, PsbX, PsbY, PsbZ, Psb30/Ycf12, at least 3 peripheral proteins of the oxygen-evolving complex and a large number of cofactors. It forms dimeric complexes.

The protein localises to the plastid. Its subcellular location is the chloroplast thylakoid membrane. One of the components of the core complex of photosystem II (PSII). PSII is a light-driven water:plastoquinone oxidoreductase that uses light energy to abstract electrons from H(2)O, generating O(2) and a proton gradient subsequently used for ATP formation. It consists of a core antenna complex that captures photons, and an electron transfer chain that converts photonic excitation into a charge separation. This subunit is found at the monomer-monomer interface. This chain is Photosystem II reaction center protein M, found in Cycas taitungensis (Prince sago).